The primary structure comprises 476 residues: Oogenesin-2 (476 aa).

An LRR 1; degenerate repeat occupies 97–121 (RCKLREITLSHDLVVVWAGSHEVEG). The LRR 2; degenerate repeat unit spans residues 176-200 (HLHCRKLKIYGLTKAAVIEMFKIVH). One copy of the LRR 3; degenerate repeat lies at 201-226 (AEYIEDLELSCLCLEYLDFLNPYLKQ). The stretch at 227–264 (MSNLLSLTLDEIIYTLNIDDYRNLNEEKVITVISHLPT) is one LRR 4; degenerate repeat. 4 LRR repeats span residues 265 to 285 (FHHLQELYVHGVIFIECLRCL), 286 to 317 (KKPLEVLSFTDCDLSQSDLDYLPYCLNIFELR), 342 to 369 (RHTLKSLQLMSCEMGETHFNALLPALSQ), and 370 to 394 (CYQLTVVNFYGNELSLLFLKKLLHH).

The protein belongs to the PRAME family. As to expression, expressed in ovary, specifically in oocytes. Detected in follicles with two layers of granulosa cells, and are present in early as well as large antral follicles.

This Mus musculus (Mouse) protein is Oogenesin-2.